Here is a 399-residue protein sequence, read N- to C-terminus: MESKDQNVYRKGSDNFSKGSNTFFGNLKSISTTTTTTTTTANTDQQVSKVAENNEIDDNSSVDSSSSNPSSSSTSTTPVKPKTFVDGALRGVWSIGVGVVNGAKGIVEQPYLGAKNNGLGGFVKGVAKGVSGVVILPAVGVLEFFSYTTQGIYNTPITVLDAMKSSPKEEEMITVSAEIPTIFFAVELEESFKTAKEKGIPHLLKVCIEFISRRKNIEGIFRISGSKFLIDEIQSKFDKGLITSVEDLDPNWIYEVACIFKSYFRYLPHSVIPDEQITEFYRIQNNITDATEKAAALKAVVNSIPNFQYTILYECISLLHDISLNSKENLMTPSNLSIVYGPSLLRPNIEKGDIQEIANANTIVFNLISFFQQIFIKNPDPSILEIEHPITPIKPMIQK.

The segment covering 1–13 (MESKDQNVYRKGS) has biased composition (basic and acidic residues). The interval 1–80 (MESKDQNVYR…SSSTSTTPVK (80 aa)) is disordered. Polar residues predominate over residues 14–31 (DNFSKGSNTFFGNLKSIS). The span at 61 to 79 (SVDSSSSNPSSSSTSTTPV) shows a compositional bias: low complexity. The Rho-GAP domain occupies 186–375 (VELEESFKTA…NLISFFQQIF (190 aa)).

The protein localises to the cytoplasm. Functionally, rho GTPase-activating protein involved in the signal transduction pathway. This is Rho GTPase-activating protein gacC (gacC) from Dictyostelium discoideum (Social amoeba).